Reading from the N-terminus, the 346-residue chain is Histidinol-phosphate aminotransferase (346 aa).

K209 is subject to N6-(pyridoxal phosphate)lysine.

It belongs to the class-II pyridoxal-phosphate-dependent aminotransferase family. Histidinol-phosphate aminotransferase subfamily. In terms of assembly, homodimer. The cofactor is pyridoxal 5'-phosphate.

It carries out the reaction L-histidinol phosphate + 2-oxoglutarate = 3-(imidazol-4-yl)-2-oxopropyl phosphate + L-glutamate. The protein operates within amino-acid biosynthesis; L-histidine biosynthesis; L-histidine from 5-phospho-alpha-D-ribose 1-diphosphate: step 7/9. This Vibrio vulnificus (strain YJ016) protein is Histidinol-phosphate aminotransferase.